We begin with the raw amino-acid sequence, 152 residues long: Pseudo histidine-containing phosphotransfer protein 5 (152 aa).

One can recognise an HPt domain in the interval 38–140 (NPNFAEEVVS…ESYFQLLRQA (103 aa)).

Functions as a two-component phosphorelay mediator between cytokinin sensor histidine kinases and response regulators (B-type ARRs). Plays an important role in propagating cytokinin signal transduction. This is Pseudo histidine-containing phosphotransfer protein 5 from Oryza sativa subsp. japonica (Rice).